Consider the following 405-residue polypeptide: Probable tRNA sulfurtransferase (405 aa).

In terms of domain architecture, THUMP spans Glu60–Leu165. ATP-binding positions include Met183–Leu184, His208–Phe209, Arg265, Gly287, and Gln296.

It belongs to the ThiI family.

Its subcellular location is the cytoplasm. It carries out the reaction [ThiI sulfur-carrier protein]-S-sulfanyl-L-cysteine + a uridine in tRNA + 2 reduced [2Fe-2S]-[ferredoxin] + ATP + H(+) = [ThiI sulfur-carrier protein]-L-cysteine + a 4-thiouridine in tRNA + 2 oxidized [2Fe-2S]-[ferredoxin] + AMP + diphosphate. The enzyme catalyses [ThiS sulfur-carrier protein]-C-terminal Gly-Gly-AMP + S-sulfanyl-L-cysteinyl-[cysteine desulfurase] + AH2 = [ThiS sulfur-carrier protein]-C-terminal-Gly-aminoethanethioate + L-cysteinyl-[cysteine desulfurase] + A + AMP + 2 H(+). It participates in cofactor biosynthesis; thiamine diphosphate biosynthesis. Its function is as follows. Catalyzes the ATP-dependent transfer of a sulfur to tRNA to produce 4-thiouridine in position 8 of tRNAs, which functions as a near-UV photosensor. Also catalyzes the transfer of sulfur to the sulfur carrier protein ThiS, forming ThiS-thiocarboxylate. This is a step in the synthesis of thiazole, in the thiamine biosynthesis pathway. The sulfur is donated as persulfide by IscS. The protein is Probable tRNA sulfurtransferase of Lactobacillus delbrueckii subsp. bulgaricus (strain ATCC BAA-365 / Lb-18).